Here is a 124-residue protein sequence, read N- to C-terminus: Small ribosomal subunit protein uS13 (124 aa).

The interval 95-124 (GLPVRGQRTHTNARTRKGPRRSVMGKRKKA) is disordered.

The protein belongs to the universal ribosomal protein uS13 family. As to quaternary structure, part of the 30S ribosomal subunit. Forms a loose heterodimer with protein S19. Forms two bridges to the 50S subunit in the 70S ribosome.

Located at the top of the head of the 30S subunit, it contacts several helices of the 16S rRNA. In the 70S ribosome it contacts the 23S rRNA (bridge B1a) and protein L5 of the 50S subunit (bridge B1b), connecting the 2 subunits; these bridges are implicated in subunit movement. Contacts the tRNAs in the A and P-sites. This is Small ribosomal subunit protein uS13 from Syntrophobacter fumaroxidans (strain DSM 10017 / MPOB).